The chain runs to 1094 residues: AP-3 complex subunit beta-1 (1094 aa).

A compositionally biased stretch (polar residues) spans 1 to 11 (MSSNSFPYNEQ). Disordered regions lie at residues 1–31 (MSSN…ISPS) and 268–292 (DNGK…KPYT). Phosphoserine occurs at positions 276 and 609. Residues 662-811 (PAGKAKQENS…EKKTKQDRTP (150 aa)) form a disordered region. A compositionally biased stretch (basic and acidic residues) spans 666-677 (AKQENSAKKFYS). 2 stretches are compositionally biased toward acidic residues: residues 678 to 696 (ESEE…ESES) and 705 to 726 (ESGE…EQDS). Basic and acidic residues-rich tracts occupy residues 727 to 738 (ESGRESGLENKR) and 748 to 764 (GKSD…KSKT). Phosphoserine is present on residues Ser750 and Ser752. The segment covering 765 to 777 (SDSSNDESSSIED) has biased composition (low complexity). Residues 778-791 (SSSDSESESEPESE) show a composition bias toward acidic residues. Positions 792–811 (SESRRVTKEKEKKTKQDRTP) are enriched in basic and acidic residues.

This sequence belongs to the adaptor complexes large subunit family. Adaptor protein complex 3 (AP-3) is a heterotetramer composed of two large adaptins (delta-type subunit AP3D1 and beta-type subunit AP3B1 or AP3B2), a medium adaptin (mu-type subunit AP3M1 or AP3M2) and a small adaptin (sigma-type subunit APS1 or AP3S2). AP-3 associates with the BLOC-1 complex. Interacts with KIF3A; interaction is direct; interaction is impaired by pyrophosphorylation of AP3B1. Post-translationally, phosphorylated on serine residues. In terms of processing, pyrophosphorylation by 5-diphosphoinositol pentakisphosphate (5-IP7) impairs interaction with KIF3A. Serine pyrophosphorylation is achieved by Mg(2+)-dependent, but enzyme independent transfer of a beta-phosphate from a inositol pyrophosphate to a pre-phosphorylated serine residue. As to expression, ubiquitously expressed.

The protein resides in the cytoplasmic vesicle. Its subcellular location is the clathrin-coated vesicle membrane. The protein localises to the golgi apparatus. In terms of biological role, subunit of non-clathrin- and clathrin-associated adaptor protein complex 3 (AP-3) that plays a role in protein sorting in the late-Golgi/trans-Golgi network (TGN) and/or endosomes. The AP complexes mediate both the recruitment of clathrin to membranes and the recognition of sorting signals within the cytosolic tails of transmembrane cargo molecules. AP-3 appears to be involved in the sorting of a subset of transmembrane proteins targeted to lysosomes and lysosome-related organelles. In concert with the BLOC-1 complex, AP-3 is required to target cargos into vesicles assembled at cell bodies for delivery into neurites and nerve terminals. This Homo sapiens (Human) protein is AP-3 complex subunit beta-1 (AP3B1).